A 2209-amino-acid chain; its full sequence is MSPSLVVPVFAGHGTTAINSTSLRERAVTDASSSSGALLLDACYYAFNVELSTLSPSEASAVGINPDHFKDPKSLLLLPSHEHYFTNSVVTAATLFLVQTLRYLASVQASSSASFASTLQMNSEHGLGIVGFSSGILPACVVGSSETTLEFISNAVETFRLAFWIGVRLQVHKASVETPELLGESPLPWSLAFLSMSPAAAESAIQSFHKSFEGTPELRVTSVVSETSVTISGRPDILAAFAAQLPPSGPVHKTTVDALYHSSSHHDGVRSQVLADVIRRNIRFPTHADIKIPVRSTYSGELLNKSPEGSASFVEQVIDMILTQPVNWDKVTEALVRAAPEAEVVHLLNFGPGAGLTKGIERYFPSGKVSSIDLSTEAVHTSTLQMPSSVQEPIAICGMSVNMPGAQSVAKLWEVLEKGINTVSEVPEHRFKVSDYNDPKKKSRTMAAHTGNFIDEPDAFDNKFFNISPREARSMDPQQRVLLHTAYEALEDAGYVPNSTPTNNPETFGCYVGVATNDYVQNLRNDIDVYYSTGTLRAFLSGRISYALQFSGPSIVVDTACSSSLIAVYQACRALMNRDCNAAVAGGVNVIGSPDMFLGLDRGHFLSPTGQCKAFDASADGYSRSEGCGIFVLKRLSDAVAENDQILGVIRGVEVNQSGNAYSITRPHAPTQENLFTQTLERSGLDASRISVVEAHGTGTQAGDPIELESIRGIFAKNRKTNNPLHITSVKANIGHLEAASGAAALAKLLLMLRHRTIPRLISLKNLNPRIKPLASDNVIIDTKQVAWAVPDESLPRVALLNNFGAAGSNGALLLEEYIPKSSEKIEVSSTFIVGLSAKNEQALVDLRASYIEYLRSPASAGVSLADIAYTATARRRIFSHRFAVTVKSKEELAHKLELASGKTVSDKAPGKVVFVFSGQGGQYLGMGSALYKTSTLFKSAIDECEYFLKKNNFPGVLPIITSDGESSELTPVEEFEANQAAIFALEYGLAKLWMSWGVTPTAVVGHSLGEYAAHVVAGVLSLESALTLVAHRVRIMMRTCELDTTGMIAINLGSGAVTDILSSSPDFSGISIACYNSATDCVASGAIGQLDALKAHLDKNVHCKSVRLKVPFGYHSSAMQPLLEEFGALAKRVTVHAPKIPVISNPLGRVVREGDKSAFNAEYYLSHCADPVQFESGISALIDDVSFMDIAAWIELGPHPTTLPMLTVHPGVSKEALLVGSLKKRQDDNLTLSSSLSQLYTSNVPVQWRDVFADVSAACVSLPSYPWQKSKFWVAWKEDSPAPASSTEGSPAPTKAFNPVNDFGMLQSWAQFPSAANSQTAIFETPISLLKTSITGHIVGDVPLCPASVYHELALAGIEASKAHLSLPLQGSHSALFNIDYVKPLVYSKDVARVVKTTIAMNTDGSGTFTVESYADSEPESVHCSGQFRPLLVADTTTKFNRMAPVVSRRTAAICSGEDDEAEVITTRTAYEIIFTRVVRYAKEYHTMKNVTISKNGMEGYAIVKLPKDHDRSKFVVHPVFMDTMLHVAGFLANMQGGDNDAYICSKVKSVKAVPSLINNDATYGVFVVNAWVESEGIMLSDAIAVDISEHGQIVAQLKGMCFKKLRLNTLQRSLAMHAGHTSPAPAPKRTVAAAPKPKITEVAPALGPRSSPAKRSVDVQNTVLKIIGDTCGIEVSALDVNADLETYGVDSLMSIEILRKFEESFLQMQFDTTIFSTCNNITELVREISSTIGSQAATAVNTPETASTPEPTLQGDAPQSTDVRSILLELISSFTGFEISSFDLNADADSAYGLDKFLFIPLFSKLQSFFPDVTLDPAKPSVCSTIGELLDEVTAQVQAGPSSSSPGIVDTKPMFVSVLGLDESDIQDDTEFETIGLDSLTAIEALHAIQTKYGLELPSNLFELHNTVKAVNQYISSKQPGKSPKPSEEATMDPDKEEDLSDLTPEQVQSVVRVLRLDEVPMSVQKSSSSGSPLFLFHDGSGAVNYLRRLGSVGREFWGFNNPNYATGKPWGSVEAMASAYADYAVKVAGSRPVIFGGWSFGGVVGFEAARQLMRRGVPVKGVVLIDSPFPVDHVPSSNEFMAVTAGAFTRGGRTPIGRMMWKQLQQNAPLLKTYDPRIAGGPYPPLVLLHNQEGIPPDAFLPYPVPRWMSEKGTDPCLLADDWSGLVGASIKVIHLPGTHFTTFATPHLGAVTQALVDGCAYLDEL.

The interval 38–261 (LLLDACYYAF…HKTTVDALYH (224 aa)) is N-terminal acylcarrier protein transacylase domain (SAT). In terms of domain architecture, Ketosynthase family 3 (KS3) spans 391–817 (QEPIAICGMS…GSNGALLLEE (427 aa)). Active-site for beta-ketoacyl synthase activity residues include Cys-561, His-696, and His-736. The tract at residues 914–1239 (VFVFSGQGGQ…NLTLSSSLSQ (326 aa)) is malonyl-CoA:ACP transacylase (MAT) domain. Catalysis depends on Ser-1008, which acts as the For acyl/malonyl transferase activity. The segment at 1306 to 1436 (MLQSWAQFPS…GQFRPLLVAD (131 aa)) is N-terminal hotdog fold. The region spanning 1306–1613 (MLQSWAQFPS…FKKLRLNTLQ (308 aa)) is the PKS/mFAS DH domain. The interval 1335 to 1610 (ITGHIVGDVP…GMCFKKLRLN (276 aa)) is product template (PT) domain. His-1338 functions as the Proton acceptor; for dehydratase activity in the catalytic mechanism. Positions 1463-1613 (AEVITTRTAY…FKKLRLNTLQ (151 aa)) are C-terminal hotdog fold. Asp-1524 (proton donor; for dehydratase activity) is an active-site residue. 2 Carrier domains span residues 1659–1734 (VDVQ…SSTI) and 1844–1921 (SSSS…SSKQ). An O-(pantetheine 4'-phosphoryl)serine mark is found at Ser-1693 and Ser-1881. A disordered region spans residues 1917–1945 (ISSKQPGKSPKPSEEATMDPDKEEDLSDL). Positions 1932–1943 (ATMDPDKEEDLS) are enriched in acidic residues. Residues 1962–2201 (VPMSVQKSSS…LGAVTQALVD (240 aa)) are thioesterase (TE) domain.

It catalyses the reaction 3 malonyl-CoA + acetyl-CoA + 2 H(+) = orsellinate + 3 CO2 + 4 CoA. The protein operates within secondary metabolite biosynthesis. In terms of biological role, non-reducing polyketide synthase, part of the gene cluster that mediates the biosynthesis of melleolides, a range of antifungal and phytotoxic polyketide derivatives composed of an orsellinic acid (OA) moiety esterified to various sesquiterpene alcohols. The first step in melleolides biosynthesis is performed by the delta(6)-protoilludene synthase PRO1 which catalyzes the cyclization of farnesyl diphosphate to protoilludene. The orsellinic acid synthase armB produces OA by condensing acetyl-CoA with 3 malonyl-CoA units in a three-round chain elongation reaction folowed by a C2-C7 ring closure. ArmB further catalyzes the trans-esterification of OA to the various sesquiterpene alcohols resulting from the hydroxylation of protoilludene. The melleolides cluster also includes 5 cytochrome P450 monooxygenases, 4 NAD(+)-dependent oxidoreductases, one flavin-dependent oxidoreductase, and one O-methyltransferase. The cytochrome P450 monooxygenases may be involved in protoilludene hydroxylation to elaborate melleolides with multiple alcohol groups, such as melleolide D, which carries alcohol functionalities at C-4, C-5, C-10, and C-13. The role of the NAD(+)-dependent enzymes remains unknown. Numerous melleolides, including arnamial, show 5'-O-methylation of the aromatic moiety which may be catalyzed by the methyltransferase encoded in the cluster. The flavin-dependent oxidoreductase might represent the dehydrogenase yielding the aldehyde in position 1 of arnamial and other melleolides. Finally, several halogenase localized outside of the cluster (armH1 to armH5), are able to catalyze the transfer of a single chlorine atom to the melleolide backbone, resulting in a 6'-chloromelleolide product. This chain is Orsellinic acid synthase armB, found in Armillaria mellea (Honey mushroom).